A 272-amino-acid polypeptide reads, in one-letter code: Eukaryotic translation initiation factor 4E homolog (272 aa).

Residues 249-272 (GKLNSGRKPSNTRGGFSSFGNKRY) are disordered. Positions 255 to 272 (RKPSNTRGGFSSFGNKRY) are enriched in polar residues.

This sequence belongs to the eukaryotic initiation factor 4E family.

Functionally, recognizes and binds the 7-methylguanosine-containing mRNA cap during an early step in the initiation of protein synthesis and facilitates ribosome binding by inducing the unwinding of the mRNAs secondary structures. In Acanthamoeba polyphaga mimivirus (APMV), this protein is Eukaryotic translation initiation factor 4E homolog.